The sequence spans 247 residues: Hydroxyacylglutathione hydrolase 1 (247 aa).

Zn(2+) is bound by residues His54, His56, Asp58, His59, His111, Asp128, and His165.

The protein belongs to the metallo-beta-lactamase superfamily. Glyoxalase II family. As to quaternary structure, monomer. The cofactor is Zn(2+).

The catalysed reaction is an S-(2-hydroxyacyl)glutathione + H2O = a 2-hydroxy carboxylate + glutathione + H(+). Its pathway is secondary metabolite metabolism; methylglyoxal degradation; (R)-lactate from methylglyoxal: step 2/2. Thiolesterase that catalyzes the hydrolysis of S-D-lactoyl-glutathione to form glutathione and D-lactic acid. The sequence is that of Hydroxyacylglutathione hydrolase 1 from Vibrio vulnificus (strain YJ016).